Here is a 239-residue protein sequence, read N- to C-terminus: Uridylate kinase (239 aa).

12–15 serves as a coordination point for ATP; sequence KLSG. Residues 20-25 form an involved in allosteric activation by GTP region; that stretch reads GDQGYG. A UMP-binding site is contributed by Gly54. Residues Gly55 and Arg59 each coordinate ATP. UMP contacts are provided by residues Asp74 and 135–142; that span reads TGNPYFTT. Thr162, Tyr168, and Asp171 together coordinate ATP.

This sequence belongs to the UMP kinase family. In terms of assembly, homohexamer.

The protein resides in the cytoplasm. The enzyme catalyses UMP + ATP = UDP + ADP. It participates in pyrimidine metabolism; CTP biosynthesis via de novo pathway; UDP from UMP (UMPK route): step 1/1. Its activity is regulated as follows. Allosterically activated by GTP. Inhibited by UTP. Catalyzes the reversible phosphorylation of UMP to UDP. The protein is Uridylate kinase of Geobacter metallireducens (strain ATCC 53774 / DSM 7210 / GS-15).